The chain runs to 829 residues: Probable beta-glucosidase H (829 aa).

Residue D225 is part of the active site. Residues 389–548 enclose the PA14 domain; the sequence is RMLSNAVIRF…DPEQMVRDAV (160 aa). N-linked (GlcNAc...) asparagine glycosylation is found at N416, N431, N473, N602, and N627.

Belongs to the glycosyl hydrolase 3 family.

It is found in the secreted. The catalysed reaction is Hydrolysis of terminal, non-reducing beta-D-glucosyl residues with release of beta-D-glucose.. It functions in the pathway glycan metabolism; cellulose degradation. Functionally, beta-glucosidases are one of a number of cellulolytic enzymes involved in the degradation of cellulosic biomass. Catalyzes the last step releasing glucose from the inhibitory cellobiose. In Aspergillus clavatus (strain ATCC 1007 / CBS 513.65 / DSM 816 / NCTC 3887 / NRRL 1 / QM 1276 / 107), this protein is Probable beta-glucosidase H (bglH).